The sequence spans 753 residues: 5-methyltetrahydropteroyltriglutamate--homocysteine methyltransferase (753 aa).

5-methyltetrahydropteroyltri-L-glutamate contacts are provided by residues 17-20 (RELK) and Lys117. L-homocysteine-binding positions include 431–433 (IGS) and Glu484. Residues 431–433 (IGS) and Glu484 each bind L-methionine. 5-methyltetrahydropteroyltri-L-glutamate contacts are provided by residues 515–516 (RC) and Trp561. Asp599 provides a ligand contact to L-homocysteine. Asp599 provides a ligand contact to L-methionine. 5-methyltetrahydropteroyltri-L-glutamate is bound at residue Glu605. 3 residues coordinate Zn(2+): His641, Cys643, and Glu665. The Proton donor role is filled by His694. Position 726 (Cys726) interacts with Zn(2+).

This sequence belongs to the vitamin-B12 independent methionine synthase family. It depends on Zn(2+) as a cofactor.

The catalysed reaction is 5-methyltetrahydropteroyltri-L-glutamate + L-homocysteine = tetrahydropteroyltri-L-glutamate + L-methionine. It participates in amino-acid biosynthesis; L-methionine biosynthesis via de novo pathway; L-methionine from L-homocysteine (MetE route): step 1/1. Its function is as follows. Catalyzes the transfer of a methyl group from 5-methyltetrahydrofolate to homocysteine resulting in methionine formation. The protein is 5-methyltetrahydropteroyltriglutamate--homocysteine methyltransferase of Escherichia coli (strain ATCC 8739 / DSM 1576 / NBRC 3972 / NCIMB 8545 / WDCM 00012 / Crooks).